The following is a 397-amino-acid chain: MFVPRGFSYAGVHCRIKRKRKDLGIIFSEVPCTAAGVFTTNVVKAAPVIYDMEILGKNPSGIRAITVNSGVANACTGEQGMINARRMAEKTAKELNIPVESVLVSSTGVIGVQLPMEKVESGIEEAVKNLSKDPVPFAEAIMTTDTKIKIHSKKVTIEGKEITVLGIAKGSGMIHPNMATMLSFITTDANVSEDALKKLLKISVDDSYNMIDVDGDTSTNDMVIILANGLAGNAPIQEETDGFWKLYEAVHEVNQVLAEKIVEDGEGATKVIEVEVRNAPDRNSARLIARAIVSSNLVKTAIYGEDANWGRVIAAAGYSGAQFDPDRLDLFFESAAGRIKVAENGQGVDFDEDTAKKILSEKKVKIILDMKQGKELARAWGCDLTEKYVEINGRYRT.

Substrate-binding residues include T143, K169, T180, E266, N392, and T397. The Nucleophile role is filled by T180.

This sequence belongs to the ArgJ family. In terms of assembly, heterotetramer of two alpha and two beta chains.

It is found in the cytoplasm. The catalysed reaction is N(2)-acetyl-L-ornithine + L-glutamate = N-acetyl-L-glutamate + L-ornithine. It carries out the reaction L-glutamate + acetyl-CoA = N-acetyl-L-glutamate + CoA + H(+). It functions in the pathway amino-acid biosynthesis; L-arginine biosynthesis; L-ornithine and N-acetyl-L-glutamate from L-glutamate and N(2)-acetyl-L-ornithine (cyclic): step 1/1. It participates in amino-acid biosynthesis; L-arginine biosynthesis; N(2)-acetyl-L-ornithine from L-glutamate: step 1/4. Competitively inhibited by L-ornithine. Functionally, catalyzes two activities which are involved in the cyclic version of arginine biosynthesis: the synthesis of N-acetylglutamate from glutamate and acetyl-CoA as the acetyl donor, and of ornithine by transacetylation between N(2)-acetylornithine and glutamate. The polypeptide is Arginine biosynthesis bifunctional protein ArgJ (Thermotoga neapolitana (strain ATCC 49049 / DSM 4359 / NBRC 107923 / NS-E)).